We begin with the raw amino-acid sequence, 496 residues long: Probable CtpA-like serine protease (496 aa).

Residues 1-16 (MDDKQHTTSSDDERAE) are compositionally biased toward basic and acidic residues. Residues 1–27 (MDDKQHTTSSDDERAENATSNQDQQTN) are disordered. Residues 17-27 (NATSNQDQQTN) show a composition bias toward polar residues. The chain crosses the membrane as a helical span at residues 39-59 (FISILIGTIIITAVITVVAYI). The region spanning 124-206 (TKSFNEGVSG…TEVTLTVQRG (83 aa)) is the PDZ domain. Catalysis depends on charge relay system residues Ser-329, Asp-340, and Lys-354.

Belongs to the peptidase S41A family.

The protein resides in the cell membrane. The polypeptide is Probable CtpA-like serine protease (Staphylococcus aureus (strain MRSA252)).